Here is a 332-residue protein sequence, read N- to C-terminus: CXADR-like membrane protein (332 aa).

Positions 1–19 (MHTLIRSFLGLWYVLGALA) are cleaved as a signal peptide. 2 Ig-like C2-type domains span residues 20–123 (QTEI…SFIT) and 130–220 (PSEL…VDVT). Over 20–231 (QTEIKLVADE…QSVSNTGILA (212 aa)) the chain is Extracellular. 2 disulfide bridges follow: C35/C109 and C151/C204. The N-linked (GlcNAc...) asparagine glycan is linked to N193. The chain crosses the membrane as a helical span at residues 232-252 (GVACGVVVGVFLIFFTVWLLF). Residues 253-332 (HKKEFKKREE…EQRHHCLEKI (80 aa)) lie on the Cytoplasmic side of the membrane. The tract at residues 276-332 (PKARLVKPGSSSSDSRSSQSGSSSTRSTTNSASRSQRTHSTQETPHGEQRHHCLEKI) is disordered. The span at 285 to 310 (SSSSDSRSSQSGSSSTRSTTNSASRS) shows a compositional bias: low complexity. Over residues 320–332 (PHGEQRHHCLEKI) the composition is skewed to basic and acidic residues.

Its subcellular location is the cell junction. The protein localises to the tight junction. The protein resides in the cell membrane. The chain is CXADR-like membrane protein (clmp) from Xenopus tropicalis (Western clawed frog).